We begin with the raw amino-acid sequence, 280 residues long: SPX domain-containing protein 2 (280 aa).

Residues 1–162 (MKFGKSLSSQ…GSMIRLPFVQ (162 aa)) enclose the SPX domain. 2 disordered regions span residues 191-244 (PTNE…KSTV) and 257-280 (GSSTVSVFSLPPLHGSNGQDEPGR).

Interacts (via SPX domain) with PHR2 (via C-terminus). Interacts with RLI1 in the nucleus to prevents its positive regulation of leaf inclination during phosphate (Pi) starvation. As to expression, predominantly expressed in roots, leaves and seeds. Localized in leaves lamina joints.

The protein localises to the nucleus. In terms of biological role, inhibits PHR2 DNA-binding activity via a phosphate (Pi)-dependent protein interaction. Together with SPX1, plays a negative role in the regulation of leaf inclination by preventing RLI1 transcription factor activity in Pi depleted conditions. In Oryza sativa subsp. japonica (Rice), this protein is SPX domain-containing protein 2.